A 389-amino-acid chain; its full sequence is Probable tRNA sulfurtransferase (389 aa).

The 109-residue stretch at 57 to 165 (DEALDRLSKI…EDETYIYHRV (109 aa)) folds into the THUMP domain. ATP-binding positions include 183–184 (LL), Lys267, Gly289, and Gln298.

The protein belongs to the ThiI family.

It localises to the cytoplasm. The enzyme catalyses [ThiI sulfur-carrier protein]-S-sulfanyl-L-cysteine + a uridine in tRNA + 2 reduced [2Fe-2S]-[ferredoxin] + ATP + H(+) = [ThiI sulfur-carrier protein]-L-cysteine + a 4-thiouridine in tRNA + 2 oxidized [2Fe-2S]-[ferredoxin] + AMP + diphosphate. It carries out the reaction [ThiS sulfur-carrier protein]-C-terminal Gly-Gly-AMP + S-sulfanyl-L-cysteinyl-[cysteine desulfurase] + AH2 = [ThiS sulfur-carrier protein]-C-terminal-Gly-aminoethanethioate + L-cysteinyl-[cysteine desulfurase] + A + AMP + 2 H(+). It participates in cofactor biosynthesis; thiamine diphosphate biosynthesis. Catalyzes the ATP-dependent transfer of a sulfur to tRNA to produce 4-thiouridine in position 8 of tRNAs, which functions as a near-UV photosensor. Also catalyzes the transfer of sulfur to the sulfur carrier protein ThiS, forming ThiS-thiocarboxylate. This is a step in the synthesis of thiazole, in the thiamine biosynthesis pathway. The sulfur is donated as persulfide by IscS. In Methanothermobacter thermautotrophicus (strain ATCC 29096 / DSM 1053 / JCM 10044 / NBRC 100330 / Delta H) (Methanobacterium thermoautotrophicum), this protein is Probable tRNA sulfurtransferase.